The sequence spans 514 residues: Peptide chain release factor 3 (514 aa).

A tr-type G domain is found at 8-268 (KKRRTFAIIS…IFLKFAPEPH (261 aa)). Residues 17–24 (SHPDAGKT), 85–89 (DTPGH), and 139–142 (NKLD) each bind GTP.

The protein belongs to the TRAFAC class translation factor GTPase superfamily. Classic translation factor GTPase family. PrfC subfamily.

The protein resides in the cytoplasm. Its function is as follows. Increases the formation of ribosomal termination complexes and stimulates activities of RF-1 and RF-2. It binds guanine nucleotides and has strong preference for UGA stop codons. It may interact directly with the ribosome. The stimulation of RF-1 and RF-2 is significantly reduced by GTP and GDP, but not by GMP. In Streptococcus pneumoniae (strain CGSP14), this protein is Peptide chain release factor 3.